The chain runs to 132 residues: L-ectoine synthase (132 aa).

It belongs to the ectoine synthase family.

It catalyses the reaction (2S)-4-acetamido-2-aminobutanoate = L-ectoine + H2O. The protein operates within amine and polyamine biosynthesis; ectoine biosynthesis; L-ectoine from L-aspartate 4-semialdehyde: step 3/3. Functionally, catalyzes the circularization of gamma-N-acetyl-alpha,gamma-diaminobutyric acid (ADABA) to ectoine (1,4,5,6-tetrahydro-2-methyl-4-pyrimidine carboxylic acid), which is an excellent osmoprotectant. The sequence is that of L-ectoine synthase from Alkalilimnicola ehrlichii (strain ATCC BAA-1101 / DSM 17681 / MLHE-1).